The chain runs to 446 residues: MPKQKAAKKDHYQYSDLSSIKKEGEEDQYHFYGVVIDASFPYKGEKRYVVTCKVADPSSVAKGGKLNTVNVVFFSQNFEDLPIIQRVGDIVRVHRARLQHYNDAKQLNVNMYYRSSWCLFIGNDKEAPLEPKVENEDGTNNYFSYTPYNFSGKSFTQEGHETKILKDLKKWSKDYFSNNDVVEQVKKADIETAMKNKTDFDLLAKVTEISDNDQYTNTVSLNDSTGQTWTGHLFKRKFPHLVKGDVLRIKSVSAKEDNSLIFSSHSNILKFFSFSSIHKKLKSSISSDTHIKTCVTKIDKAAHNKMDITPLKKLFFNPKKSEKLFRSQFSVLKVDTKNLEDYVGAFDGKKWHSYKGKKTPKDAELRWNIKLIVTDYKNQQDDKAYMIHLDDNSFFKGINPANWSNAATKKKAEKAFSVLTNNKVNYVDAILERDKKNYHIRHTQFK.

The protein belongs to the telombin family. In terms of assembly, monomer.

The protein localises to the nucleus. Its subcellular location is the chromosome. The protein resides in the telomere. Its function is as follows. May function as protective capping of the single-stranded telomeric overhang. May also participate in telomere length regulation during DNA replication. Binds specifically to the T4G4-containing extension on the 3'strand and protects this region of the telomere from nuclease digestion and chemical modification. The protein is Telomere-binding protein 51 kDa subunit of Euplotes crassus.